The sequence spans 170 residues: Crossover junction endodeoxyribonuclease RuvC (170 aa).

Catalysis depends on residues D11, E71, and D143. Mg(2+)-binding residues include D11, E71, and D143.

Belongs to the RuvC family. In terms of assembly, homodimer which binds Holliday junction (HJ) DNA. The HJ becomes 2-fold symmetrical on binding to RuvC with unstacked arms; it has a different conformation from HJ DNA in complex with RuvA. In the full resolvosome a probable DNA-RuvA(4)-RuvB(12)-RuvC(2) complex forms which resolves the HJ. It depends on Mg(2+) as a cofactor.

The protein localises to the cytoplasm. The catalysed reaction is Endonucleolytic cleavage at a junction such as a reciprocal single-stranded crossover between two homologous DNA duplexes (Holliday junction).. The RuvA-RuvB-RuvC complex processes Holliday junction (HJ) DNA during genetic recombination and DNA repair. Endonuclease that resolves HJ intermediates. Cleaves cruciform DNA by making single-stranded nicks across the HJ at symmetrical positions within the homologous arms, yielding a 5'-phosphate and a 3'-hydroxyl group; requires a central core of homology in the junction. The consensus cleavage sequence is 5'-(A/T)TT(C/G)-3'. Cleavage occurs on the 3'-side of the TT dinucleotide at the point of strand exchange. HJ branch migration catalyzed by RuvA-RuvB allows RuvC to scan DNA until it finds its consensus sequence, where it cleaves and resolves the cruciform DNA. The polypeptide is Crossover junction endodeoxyribonuclease RuvC (Rhizobium rhizogenes (strain K84 / ATCC BAA-868) (Agrobacterium radiobacter)).